A 380-amino-acid polypeptide reads, in one-letter code: Cobalt-precorrin-5B C(1)-methyltransferase (380 aa).

It belongs to the CbiD family.

The catalysed reaction is Co-precorrin-5B + S-adenosyl-L-methionine = Co-precorrin-6A + S-adenosyl-L-homocysteine. The protein operates within cofactor biosynthesis; adenosylcobalamin biosynthesis; cob(II)yrinate a,c-diamide from sirohydrochlorin (anaerobic route): step 6/10. Catalyzes the methylation of C-1 in cobalt-precorrin-5B to form cobalt-precorrin-6A. The polypeptide is Cobalt-precorrin-5B C(1)-methyltransferase (Salinispora arenicola (strain CNS-205)).